Consider the following 375-residue polypeptide: Ribosomal RNA large subunit methyltransferase F (375 aa).

Disordered stretches follow at residues 1–39 (MKNN…AAVK) and 262–281 (NQRK…GKPT). A compositionally biased stretch (basic residues) spans 27-38 (AKPKRVKKKAAV).

This sequence belongs to the methyltransferase superfamily. METTL16/RlmF family.

The protein resides in the cytoplasm. The catalysed reaction is adenosine(1618) in 23S rRNA + S-adenosyl-L-methionine = N(6)-methyladenosine(1618) in 23S rRNA + S-adenosyl-L-homocysteine + H(+). Specifically methylates the adenine in position 1618 of 23S rRNA. This is Ribosomal RNA large subunit methyltransferase F from Vibrio parahaemolyticus serotype O3:K6 (strain RIMD 2210633).